A 468-amino-acid chain; its full sequence is 6-phospho-beta-galactosidase (468 aa).

5 residues coordinate D-galactose 6-phosphate: Gln-19, His-116, Asn-159, Glu-160, and Asn-297. The Proton donor role is filled by Glu-160. Residue Glu-375 is the Nucleophile of the active site. D-galactose 6-phosphate is bound by residues Ser-428, Trp-429, Lys-435, and Tyr-437.

This sequence belongs to the glycosyl hydrolase 1 family.

The enzyme catalyses a 6-phospho-beta-D-galactoside + H2O = D-galactose 6-phosphate + an alcohol. It functions in the pathway carbohydrate metabolism; lactose degradation; D-galactose 6-phosphate and beta-D-glucose from lactose 6-phosphate: step 1/1. The sequence is that of 6-phospho-beta-galactosidase from Streptococcus pyogenes serotype M2 (strain MGAS10270).